Reading from the N-terminus, the 491-residue chain is Glutamyl-tRNA(Gln) amidotransferase subunit A (491 aa).

Active-site charge relay system residues include lysine 79 and serine 158. Serine 182 serves as the catalytic Acyl-ester intermediate.

The protein belongs to the amidase family. GatA subfamily. In terms of assembly, heterotrimer of A, B and C subunits.

The enzyme catalyses L-glutamyl-tRNA(Gln) + L-glutamine + ATP + H2O = L-glutaminyl-tRNA(Gln) + L-glutamate + ADP + phosphate + H(+). In terms of biological role, allows the formation of correctly charged Gln-tRNA(Gln) through the transamidation of misacylated Glu-tRNA(Gln) in organisms which lack glutaminyl-tRNA synthetase. The reaction takes place in the presence of glutamine and ATP through an activated gamma-phospho-Glu-tRNA(Gln). The polypeptide is Glutamyl-tRNA(Gln) amidotransferase subunit A (Anaplasma phagocytophilum (strain HZ)).